We begin with the raw amino-acid sequence, 285 residues long: Proteasome subunit beta (285 aa).

A propeptide spans 1 to 50 (MTAEHPARLPQAFMTPGSSSFVDFLAAHDPSLLPSSRALPAGSAPPAPHG) (removed in mature form; by autocatalysis). Threonine 51 functions as the Nucleophile in the catalytic mechanism. Positions 266 to 285 (RTRQARSSRSRHGSLGGDLR) are disordered.

This sequence belongs to the peptidase T1B family. In terms of assembly, the 20S proteasome core is composed of 14 alpha and 14 beta subunits that assemble into four stacked heptameric rings, resulting in a barrel-shaped structure. The two inner rings, each composed of seven catalytic beta subunits, are sandwiched by two outer rings, each composed of seven alpha subunits. The catalytic chamber with the active sites is on the inside of the barrel. Has a gated structure, the ends of the cylinder being occluded by the N-termini of the alpha-subunits. Is capped by the proteasome-associated ATPase, ARC.

It localises to the cytoplasm. The enzyme catalyses Cleavage of peptide bonds with very broad specificity.. It functions in the pathway protein degradation; proteasomal Pup-dependent pathway. With respect to regulation, the formation of the proteasomal ATPase ARC-20S proteasome complex, likely via the docking of the C-termini of ARC into the intersubunit pockets in the alpha-rings, may trigger opening of the gate for substrate entry. Interconversion between the open-gate and close-gate conformations leads to a dynamic regulation of the 20S proteasome proteolysis activity. Its function is as follows. Component of the proteasome core, a large protease complex with broad specificity involved in protein degradation. This chain is Proteasome subunit beta, found in Sanguibacter keddieii (strain ATCC 51767 / DSM 10542 / NCFB 3025 / ST-74).